A 557-amino-acid polypeptide reads, in one-letter code: Kelch repeat and BTB domain-containing protein 2 (557 aa).

The region spanning 26–95 (CDVIITIGDG…LYNRHISSMN (70 aa)) is the BTB domain. The 91-residue stretch at 133-223 (HKLYEMVHIP…CIDIQNLDKK (91 aa)) folds into the BACK domain. 3 Kelch repeats span residues 305 to 352 (EIII…VIDD), 353 to 399 (TIYA…VLDQ), and 401 to 464 (IYII…SHKD).

As to quaternary structure, interacts (via BTB domain) with host CUL3.

It localises to the host cytoplasm. Its function is as follows. Probable substrate-specific adapter of CUL3-containing E3 ubiquitin-protein ligases which mediate the ubiquitination and subsequent proteasomal degradation of host target proteins. This Bos taurus (Bovine) protein is Kelch repeat and BTB domain-containing protein 2 (KBTB2).